The chain runs to 1065 residues: Probable arabinosyltransferase B (1065 aa).

12 helical membrane passes run 15–37 (WVATIAGLIGFVLSVATPLLPVV), 204–226 (LKLAAMVTAILATIVALVALWRL), 241–263 (NWRTFTLADVAVIFGFVLWHVIG), 394–413 (YSRLTPAALAVITAAFTLGV), 417–436 (GLIAVAALVAGGRPILRILV), 441–463 (VVGTWPLVAPMLAAGTVILTVVF), 510–527 (FGFLITALCLFTAVFIML), 540–557 (AWRLMGVIFGTMFFLMFT), 567–589 (LFAAVGAAMAALTTVLVSPAVLG), 596–618 (AFLAALLFMMALCFATTNGWWYV), 633–655 (GGITVSTVFFSMFVAAALYAIWL), and 667–689 (LARALTAAPVPLAAGFMALVFIA).

Belongs to the emb family.

The protein localises to the cell membrane. In terms of biological role, arabinosyl transferase responsible for the polymerization of arabinose into the arabinan of arabinogalactan. The chain is Probable arabinosyltransferase B (embB) from Mycobacterium avium.